The sequence spans 369 residues: 2-aminoethylphosphonate--pyruvate transaminase (369 aa).

Lys-193 is modified (N6-(pyridoxal phosphate)lysine).

This sequence belongs to the class-V pyridoxal-phosphate-dependent aminotransferase family. PhnW subfamily. In terms of assembly, homodimer. Pyridoxal 5'-phosphate serves as cofactor.

It carries out the reaction (2-aminoethyl)phosphonate + pyruvate = phosphonoacetaldehyde + L-alanine. In terms of biological role, involved in phosphonate degradation. The sequence is that of 2-aminoethylphosphonate--pyruvate transaminase from Burkholderia pseudomallei (strain 1106a).